A 303-amino-acid chain; its full sequence is Shikimate kinase 1, chloroplastic (303 aa).

A chloroplast-targeting transit peptide spans 1–66; it reads MEAAITQRIQ…QRRAVSPAVS (66 aa). Position 109 to 116 (109 to 116) interacts with ATP; it reads GMMGSGKT. Thr-116 contributes to the Mg(2+) binding site. Substrate is bound by residues Asp-134, Arg-159, and Gly-181. Arg-220 is an ATP binding site.

Belongs to the shikimate kinase family. As to quaternary structure, homodimer. It depends on Mg(2+) as a cofactor.

It localises to the plastid. It is found in the chloroplast. It catalyses the reaction shikimate + ATP = 3-phosphoshikimate + ADP + H(+). It participates in metabolic intermediate biosynthesis; chorismate biosynthesis; chorismate from D-erythrose 4-phosphate and phosphoenolpyruvate: step 5/7. Catalyzes the specific phosphorylation of the 3-hydroxyl group of shikimic acid using ATP as a cosubstrate. This Arabidopsis thaliana (Mouse-ear cress) protein is Shikimate kinase 1, chloroplastic (SK1).